A 62-amino-acid chain; its full sequence is Conotoxin Tx5.1 (62 aa).

The signal sequence occupies residues M1–A22. Positions Q23–R49 are excised as a propeptide. Position 60 is a glutamine amide (Q60).

Belongs to the conotoxin T superfamily. Post-translationally, contains 2 disulfide bonds that can be either 'C1-C3, C2-C4' or 'C1-C4, C2-C3', since these disulfide connectivities have been observed for conotoxins with cysteine framework V (for examples, see AC P0DQQ7 and AC P81755). Expressed by the venom duct.

It is found in the secreted. This is Conotoxin Tx5.1 from Conus textile (Cloth-of-gold cone).